The chain runs to 357 residues: Outer membrane porin protein OmpD (357 aa).

Positions 1–21 (MKLKLVAVAVTTLLAAGAVNA) are cleaved as a signal peptide.

It belongs to the Gram-negative porin family. In terms of assembly, homotrimer.

It localises to the cell outer membrane. Its function is as follows. Forms pores that allow passive diffusion of small molecules across the outer membrane. This is Outer membrane porin protein OmpD (ompD) from Citrobacter koseri (strain ATCC BAA-895 / CDC 4225-83 / SGSC4696).